We begin with the raw amino-acid sequence, 242 residues long: MTHSPLAQFDIKKLIDIKMFGFDVSFTNSSIYMLLASILALTYFYLAFYNRKLVPSRLQVSAEIVYNLVADMLNQNIGVKGRKFIPLVFSLFIFILFCNLLGMTPYSFTTTSHIIVTFTLAILVFLTVTIVGFVKHGLRFLTLFLPHGTPLWLAPLMIVIELFTYLARPVSLSLRLAANMMAGHVLLKVIAGFTVSLMIYLKFLPIPLMMILIGFEIFVAILQAYIFTILSCMYLNDAINLH.

Transmembrane regions (helical) follow at residues 29–49, 84–104, 114–134, 140–160, 189–209, and 210–230; these read SSIYMLLASILALTYFYLAFY, FIPLVFSLFIFILFCNLLGMT, IIVTFTLAILVFLTVTIVGFV, FLTLFLPHGTPLWLAPLMIVI, VIAGFTVSLMIYLKFLPIPLM, and MILIGFEIFVAILQAYIFTIL.

It belongs to the ATPase A chain family. In terms of assembly, F-type ATPases have 2 components, CF(1) - the catalytic core - and CF(0) - the membrane proton channel. CF(1) has five subunits: alpha(3), beta(3), gamma(1), delta(1), epsilon(1). CF(0) has three main subunits: a(1), b(2) and c(9-12). The alpha and beta chains form an alternating ring which encloses part of the gamma chain. CF(1) is attached to CF(0) by a central stalk formed by the gamma and epsilon chains, while a peripheral stalk is formed by the delta and b chains.

It localises to the cell inner membrane. Key component of the proton channel; it plays a direct role in the translocation of protons across the membrane. The polypeptide is ATP synthase subunit a (Rickettsia massiliae (strain Mtu5)).